We begin with the raw amino-acid sequence, 376 residues long: Alpha-centractin (376 aa).

Residue methionine 1 is modified to N-acetylmethionine.

It belongs to the actin family. ARP1 subfamily. As to quaternary structure, part of the ACTR1A/ACTB filament around which the dynactin complex is built. The filament contains 8 copies of ACTR1A and 1 ACTB. Interacts with dynein and adapters such as BICD2. Interacts with BCCIP (isoform 2/alpha).

It localises to the cytoplasm. The protein localises to the cytoskeleton. Its subcellular location is the microtubule organizing center. The protein resides in the centrosome. It is found in the cell cortex. Part of the ACTR1A/ACTB filament around which the dynactin complex is built. The dynactin multiprotein complex activates the molecular motor dynein for ultra-processive transport along microtubules. The chain is Alpha-centractin (ACTR1A) from Canis lupus familiaris (Dog).